We begin with the raw amino-acid sequence, 292 residues long: Elongation factor Ts (292 aa).

Residues 79–82 form an involved in Mg(2+) ion dislocation from EF-Tu region; the sequence is TDFV.

The protein belongs to the EF-Ts family.

The protein localises to the cytoplasm. In terms of biological role, associates with the EF-Tu.GDP complex and induces the exchange of GDP to GTP. It remains bound to the aminoacyl-tRNA.EF-Tu.GTP complex up to the GTP hydrolysis stage on the ribosome. This chain is Elongation factor Ts (tsf), found in Idiomarina loihiensis (strain ATCC BAA-735 / DSM 15497 / L2-TR).